The chain runs to 244 residues: Small ribosomal subunit protein uS3 (244 aa).

Residues 38–106 (IRKYLNARLA…EVQINIFEVK (69 aa)) form the KH type-2 domain. The span at 222–235 (TGRRNDNAGGNRDK) shows a compositional bias: basic and acidic residues. The disordered stretch occupies residues 222-244 (TGRRNDNAGGNRDKNFKRKRANR).

It belongs to the universal ribosomal protein uS3 family. In terms of assembly, part of the 30S ribosomal subunit. Forms a tight complex with proteins S10 and S14.

Its function is as follows. Binds the lower part of the 30S subunit head. Binds mRNA in the 70S ribosome, positioning it for translation. The protein is Small ribosomal subunit protein uS3 of Parabacteroides distasonis (strain ATCC 8503 / DSM 20701 / CIP 104284 / JCM 5825 / NCTC 11152).